The chain runs to 20 residues: Trypsin inhibitor A chain (20 aa).

This sequence belongs to the protease inhibitor I3 (leguminous Kunitz-type inhibitor) family. Heterodimer of an 'A' and a 'B' chain linked by a disulfide bond.

Inhibits trypsin and alpha-chymotrypsin. In Albizia julibrissin (Silk tree), this protein is Trypsin inhibitor A chain.